We begin with the raw amino-acid sequence, 184 residues long: Fanconi anemia core complex-associated protein 20 (184 aa).

Disordered stretches follow at residues 1-30 and 46-81; these read MEEE…PWFL and TVGG…TVPP. A compositionally biased stretch (basic residues) spans 7-16; the sequence is LRGRLSRRRP. A compositionally biased stretch (polar residues) spans 47–57; that stretch reads VGGNTDWTPNS. The residue at position 119 (Ser119) is a Phosphoserine. Residues 148–184 form a UBZ2-type zinc finger; the sequence is LLNCPLCQKAFDPKLTQLDVDSHLAQCLAESTEDVVW. Residues Cys151, Cys154, His170, and Cys174 each contribute to the Zn(2+) site.

As to quaternary structure, component of the Fanconi anemia (FA) complex. Interacts with FANCA; interaction is direct. Interacts with REV1.

Its subcellular location is the nucleus. The protein localises to the chromosome. In terms of biological role, component of the Fanconi anemia (FA) complex required to recruit the FA complex to DNA interstrand cross-links (ICLs) and promote ICLs repair. Following DNA damage recognizes and binds 'Lys-63'-linked ubiquitin generated by RNF8 at ICLs and recruits other components of the FA complex. Promotes translesion synthesis via interaction with REV1. The protein is Fanconi anemia core complex-associated protein 20 of Rattus norvegicus (Rat).